The chain runs to 376 residues: MAESESPAIVIDNGSGMCKAGIAGDDAPRAAFPSIVGRPKMPGIMVGMDQKECYVGEEAQAKRGVLNLKYPIEHGIVTDYDDMEKIWHHCFYNELRVTPEEHPCLLTEAPQNPKLNREKMTKTMFETFNVPSFYVAIQAVLSLYASGRTTGIVVDSGDGVTHTVPIYEGYALPHAILRIDLAGRELTEYCMKLLYEIGLNFSSTAEREIIRDIKEKLCYVAIDYEAELKAYKESSQNDKSYELPDGNTITVQDQRFRCPELLFKPAFIGKEFPGIHELTFNSIMKCDVDVRKDPYNNIVLSGGTTMFPGIAERLSKEVSALAPSSMKIKVVAPPERRYSVWIGGSILSSLSTFQTMWITKAEYDESGPSIVHRKCF.

Belongs to the actin family.

It is found in the cytoplasm. The protein localises to the cytoskeleton. The enzyme catalyses ATP + H2O = ADP + phosphate + H(+). In terms of biological role, actins are highly conserved proteins that are involved in various types of cell motility and are ubiquitously expressed in all eukaryotic cells. The polypeptide is Actin, macronuclear (Tetrahymena thermophila).